Here is a 69-residue protein sequence, read N- to C-terminus: DNA-directed RNA polymerase subunit epsilon (69 aa).

It belongs to the RNA polymerase subunit epsilon family. In terms of assembly, RNAP is composed of a core of 2 alpha, a beta and a beta' subunit. The core is associated with a delta subunit, and at least one of epsilon or omega. When a sigma factor is associated with the core the holoenzyme is formed, which can initiate transcription.

It carries out the reaction RNA(n) + a ribonucleoside 5'-triphosphate = RNA(n+1) + diphosphate. In terms of biological role, a non-essential component of RNA polymerase (RNAP). This chain is DNA-directed RNA polymerase subunit epsilon, found in Bacillus pumilus (strain SAFR-032).